Consider the following 300-residue polypeptide: GTPase Era (300 aa).

An Era-type G domain is found at 7–175 (KSGFAVMAGL…KTAVAETLPF (169 aa)). The tract at residues 15 to 22 (GLPNAGKS) is G1. 15 to 22 (GLPNAGKS) serves as a coordination point for GTP. The segment at 41 to 45 (QMTRQ) is G2. The G3 stretch occupies residues 62 to 65 (DTPG). Residues 62-66 (DTPGF) and 124-127 (NKAD) each bind GTP. Residues 124-127 (NKAD) are G4. Residues 154–156 (ISA) form a G5 region. Residues 198 to 283 (IREQIFNLYE…RLELEVSVEP (86 aa)) form the KH type-2 domain.

This sequence belongs to the TRAFAC class TrmE-Era-EngA-EngB-Septin-like GTPase superfamily. Era GTPase family. Monomer.

It is found in the cytoplasm. It localises to the cell inner membrane. In terms of biological role, an essential GTPase that binds both GDP and GTP, with rapid nucleotide exchange. Plays a role in 16S rRNA processing and 30S ribosomal subunit biogenesis and possibly also in cell cycle regulation and energy metabolism. The protein is GTPase Era of Elusimicrobium minutum (strain Pei191).